Consider the following 213-residue polypeptide: Thymidylate kinase (213 aa).

11 to 18 (GGEGAGKT) is an ATP binding site.

The protein belongs to the thymidylate kinase family.

It catalyses the reaction dTMP + ATP = dTDP + ADP. Its function is as follows. Phosphorylation of dTMP to form dTDP in both de novo and salvage pathways of dTTP synthesis. The protein is Thymidylate kinase of Shouchella clausii (strain KSM-K16) (Alkalihalobacillus clausii).